Here is a 66-residue protein sequence, read N- to C-terminus: Large ribosomal subunit protein eL24 (66 aa).

Residues Cys6, Cys9, Cys32, and Cys36 each contribute to the Zn(2+) site. The C4-type zinc-finger motif lies at 6 to 36 (CSFCGKTIEPGTGIMYVRKDGAILYFCSNKC).

This sequence belongs to the eukaryotic ribosomal protein eL24 family. In terms of assembly, part of the 50S ribosomal subunit. Forms a cluster with proteins L3 and L14. Zn(2+) serves as cofactor.

In terms of biological role, binds to the 23S rRNA. In Thermoplasma volcanium (strain ATCC 51530 / DSM 4299 / JCM 9571 / NBRC 15438 / GSS1), this protein is Large ribosomal subunit protein eL24.